We begin with the raw amino-acid sequence, 285 residues long: MTNVTGDYTDCTPLLGDRAALDSFYEEHGYLFLRNVLDRDLVKTVAEQMREGLVALGAADPHATLEELTIDSFESVDEVAMHDYVKYDAFWNNPSTIKVFEQVFGEPVFVFLSTTIRYYPSQAGSEEPSFHYLTPFHQDGFYIGPNQDFRTFWIPLIRTTRESGGVALADGSHRRGKRDHVLNESFRRFGHPVRGIPPTEVSEDEHLLHSPMEPGDILLFHAHMCHKSIPNLSKDPRLMRMSMDTRVQPAKSHRGFNAMTPWTESAKDASKGIMAKITGTPTDVE.

Arg117 lines the substrate pocket. Positions 137 and 139 each coordinate Fe cation. 2-oxoglutarate-binding positions include 137–139 (HQD) and Trp153. Arg188 contributes to the substrate binding site. Residue His226 coordinates Fe cation. 2 residues coordinate 2-oxoglutarate: Ser228 and Arg240.

Belongs to the PhyH family. It depends on Fe cation as a cofactor. L-ascorbate is required as a cofactor.

The catalysed reaction is 1-deoxypentalenate + 2-oxoglutarate + O2 = 1-deoxy-11beta-hydroxypentalenate + succinate + CO2. The protein operates within antibiotic biosynthesis; neopentalenolactone biosynthesis. In terms of biological role, catalyzes the conversion of 1-deoxypentalenic acid to 11-beta-hydroxy-1-deoxypentalenic acid in the biosynthesis of neopentalenolactone antibiotic. The protein is 1-deoxypentalenic acid 11-beta-hydroxylase (ptlH) of Streptomyces avermitilis (strain ATCC 31267 / DSM 46492 / JCM 5070 / NBRC 14893 / NCIMB 12804 / NRRL 8165 / MA-4680).